Consider the following 950-residue polypeptide: Protocadherin alpha-1 (950 aa).

The first 29 residues, 1-29 (MVFSRRGGLGARDLLLWLLLLAAWEVGSG), serve as a signal peptide directing secretion. Cadherin domains are found at residues 30-133 (QLHY…PPVF), 157-242 (AADA…APLF), 243-350 (DQAV…APEL), 351-455 (AVTS…APAF), 456-565 (AQPE…APAL), and 588-678 (GHVV…APKA). Over 30–697 (QLHYSIPEEA…GPEAALVDVN (668 aa)) the chain is Extracellular. Residues N257 and N265 are each glycosylated (N-linked (GlcNAc...) asparagine). N548 carries N-linked (GlcNAc...) asparagine glycosylation. The helical transmembrane segment at 698-718 (VYLIIAICAVSSLLVLTLLLY) threads the bilayer. Over 719-950 (TALRCSVPPT…GNSTTDNSDQ (232 aa)) the chain is Cytoplasmic. PXXP repeat units lie at residues 734 to 737 (PGKP), 799 to 802 (PRQP), 832 to 835 (PGGP), 873 to 876 (PGNP), and 891 to 894 (PGSP). The 5 X 4 AA repeats of P-X-X-P stretch occupies residues 734–894 (PGKPTLVCSS…PDKFIIPGSP (161 aa)). 3 disordered regions span residues 752–808 (QQRR…DWRY), 828–856 (LRAG…EVSP), and 871–890 (YGPG…KFII). Positions 900 to 950 (RQEPTNSQIDKSDFITFGKKEETKKKKKKKKGNKTQEKKEKGNSTTDNSDQ) are disordered. A compositionally biased stretch (basic and acidic residues) spans 909–923 (DKSDFITFGKKEETK).

Its subcellular location is the cell membrane. It is found in the secreted. Its function is as follows. Potential calcium-dependent cell-adhesion protein. May be involved in the establishment and maintenance of specific neuronal connections in the brain. The protein is Protocadherin alpha-1 (PCDHA1) of Homo sapiens (Human).